Consider the following 337-residue polypeptide: DNA-directed RNA polymerase subunit alpha (337 aa).

The segment at 1-231 is alpha N-terminal domain (alpha-NTD); sequence MRNITTSAYT…KQLSVFDKIT (231 aa). The alpha C-terminal domain (alpha-CTD) stretch occupies residues 248–337; that stretch reads NTKLLQNITD…IAELKAQNEG (90 aa).

It belongs to the RNA polymerase alpha chain family. In terms of assembly, homodimer. The RNAP catalytic core consists of 2 alpha, 1 beta, 1 beta' and 1 omega subunit. When a sigma factor is associated with the core the holoenzyme is formed, which can initiate transcription.

It catalyses the reaction RNA(n) + a ribonucleoside 5'-triphosphate = RNA(n+1) + diphosphate. Its function is as follows. DNA-dependent RNA polymerase catalyzes the transcription of DNA into RNA using the four ribonucleoside triphosphates as substrates. The sequence is that of DNA-directed RNA polymerase subunit alpha from Campylobacter jejuni subsp. jejuni serotype O:6 (strain 81116 / NCTC 11828).